Reading from the N-terminus, the 556-residue chain is Formate--tetrahydrofolate ligase (556 aa).

65–72 contacts ATP; it reads TPAGEGKS.

The protein belongs to the formate--tetrahydrofolate ligase family.

The catalysed reaction is (6S)-5,6,7,8-tetrahydrofolate + formate + ATP = (6R)-10-formyltetrahydrofolate + ADP + phosphate. Its pathway is one-carbon metabolism; tetrahydrofolate interconversion. In Clostridium perfringens (strain 13 / Type A), this protein is Formate--tetrahydrofolate ligase.